A 431-amino-acid polypeptide reads, in one-letter code: Adenylosuccinate synthetase (431 aa).

Residues 13-19 (GDEGKGK) and 41-43 (GHT) contribute to the GTP site. The active-site Proton acceptor is the D14. Mg(2+) contacts are provided by D14 and G41. IMP-binding positions include 14–17 (DEGK), 39–42 (NAGH), T130, R144, Q225, T240, and R304. H42 (proton donor) is an active-site residue. 300–306 (ATTGRKR) contributes to the substrate binding site. GTP is bound by residues R306, 332–334 (KLD), and 415–417 (STG).

This sequence belongs to the adenylosuccinate synthetase family. Homodimer. The cofactor is Mg(2+).

It is found in the cytoplasm. It catalyses the reaction IMP + L-aspartate + GTP = N(6)-(1,2-dicarboxyethyl)-AMP + GDP + phosphate + 2 H(+). Its pathway is purine metabolism; AMP biosynthesis via de novo pathway; AMP from IMP: step 1/2. Plays an important role in the de novo pathway of purine nucleotide biosynthesis. Catalyzes the first committed step in the biosynthesis of AMP from IMP. The sequence is that of Adenylosuccinate synthetase from Shewanella piezotolerans (strain WP3 / JCM 13877).